A 233-amino-acid chain; its full sequence is MREHRPIIALDFPSFEVVKEFLALFPAEESLYLKVGMELYYAAGPEIVSYLKGLGHSVFLDLKLHDIPNTVKSAMKILSQLGVDMTNVHAAGGVEMMKAAREGLGSQAKLIAVTQLTSTSEAQMQEFQNIQTSLQESVIHYAKKTAEAGLDGVVCSAQEVQVIKQATNPDFICLTPGIRPAGVAVGDQKRVMTPADAYQIGSDYIVVGRPITQAEDPVAAYHAIKDEWTQDWN.

Substrate is bound by residues Asp-11, Lys-34, 61–70 (DLKLHDIPNT), Thr-117, Arg-179, Gln-188, Gly-208, and Arg-209. The Proton donor role is filled by Lys-63.

The protein belongs to the OMP decarboxylase family. Type 1 subfamily. As to quaternary structure, homodimer.

It carries out the reaction orotidine 5'-phosphate + H(+) = UMP + CO2. It functions in the pathway pyrimidine metabolism; UMP biosynthesis via de novo pathway; UMP from orotate: step 2/2. Functionally, catalyzes the decarboxylation of orotidine 5'-monophosphate (OMP) to uridine 5'-monophosphate (UMP). This chain is Orotidine 5'-phosphate decarboxylase, found in Streptococcus pneumoniae (strain Hungary19A-6).